The chain runs to 491 residues: MYRKSALELRDAVVNRELSVTAITEYFYHRIESHDEQIGAFLSLCKERALLRASRIDDKLAKGDPIGLLAGIPIGVKDNIHITGVKTTCASKMLENFVAPFDSTVVRRIEMEDGILLGKLNMDEFAMGSTTRYSAFHPTNNPWDLERVPGGSSGGSAAAVSARFCPIALGSDTGGSIRQPAAFCGVVGFKPSYGAVSRYGLVAFGSSLDQIGPLTTVVEDVALAMDAFAGRDPKDSTTRDFFKGTFSQALSLEVPKLIGVPRGFLDGLQEDCKENFFEALAVMEREGSRIIDVDLSVLKHAVPVYYIVASAEAATNLARFDGVRYGHRCAQADNMHEMYARSRKEGFGKEVTRRILLGNYVLSAERQNIFYKKGMAVRARLIDAFQAAFERCDVIAMPVCATPAIRDQDVLDPVSLYLQDIYTVAVNLAYLPAISVPSGLSKEGLPLGVQFIGERGSDQQICQVGYSFQEHSQIKQLYPKAVNGLFDGGIE.

Active-site charge relay system residues include K77 and S152. S176 acts as the Acyl-ester intermediate in catalysis.

It belongs to the amidase family. GatA subfamily. As to quaternary structure, heterotrimer of A, B and C subunits.

The enzyme catalyses L-glutamyl-tRNA(Gln) + L-glutamine + ATP + H2O = L-glutaminyl-tRNA(Gln) + L-glutamate + ADP + phosphate + H(+). Its function is as follows. Allows the formation of correctly charged Gln-tRNA(Gln) through the transamidation of misacylated Glu-tRNA(Gln) in organisms which lack glutaminyl-tRNA synthetase. The reaction takes place in the presence of glutamine and ATP through an activated gamma-phospho-Glu-tRNA(Gln). The chain is Glutamyl-tRNA(Gln) amidotransferase subunit A from Chlamydia trachomatis serovar L2 (strain ATCC VR-902B / DSM 19102 / 434/Bu).